Here is a 69-residue protein sequence, read N- to C-terminus: UPF0337 protein YjbJ (69 aa).

This sequence belongs to the UPF0337 (CsbD) family.

This Escherichia coli O157:H7 protein is UPF0337 protein YjbJ (yjbJ).